Here is a 130-residue protein sequence, read N- to C-terminus: Small ribosomal subunit protein uS8 (130 aa).

It belongs to the universal ribosomal protein uS8 family. In terms of assembly, part of the 30S ribosomal subunit.

In terms of biological role, one of the primary rRNA binding proteins, it binds directly to 16S rRNA central domain where it helps coordinate assembly of the platform of the 30S subunit. The chain is Small ribosomal subunit protein uS8 from Pyrococcus horikoshii (strain ATCC 700860 / DSM 12428 / JCM 9974 / NBRC 100139 / OT-3).